The primary structure comprises 399 residues: Tyrosine--tRNA ligase (399 aa).

A 'HIGH' region motif is present at residues 42 to 51 (PTAPDLHLGH). The 'KMSKS' region signature appears at 226–230 (KMSKS). Position 229 (Lys229) interacts with ATP. Residues 336-396 (MPIAAVLNKA…GKKAFARITL (61 aa)) form the S4 RNA-binding domain.

Belongs to the class-I aminoacyl-tRNA synthetase family. TyrS type 2 subfamily. In terms of assembly, homodimer.

The protein localises to the cytoplasm. It carries out the reaction tRNA(Tyr) + L-tyrosine + ATP = L-tyrosyl-tRNA(Tyr) + AMP + diphosphate + H(+). In terms of biological role, catalyzes the attachment of tyrosine to tRNA(Tyr) in a two-step reaction: tyrosine is first activated by ATP to form Tyr-AMP and then transferred to the acceptor end of tRNA(Tyr). This chain is Tyrosine--tRNA ligase, found in Pseudomonas fluorescens (strain Pf0-1).